We begin with the raw amino-acid sequence, 140 residues long: 3-hydroxyacyl-[acyl-carrier-protein] dehydratase FabZ (140 aa).

His47 is a catalytic residue.

The protein belongs to the thioester dehydratase family. FabZ subfamily.

Its subcellular location is the cytoplasm. The enzyme catalyses a (3R)-hydroxyacyl-[ACP] = a (2E)-enoyl-[ACP] + H2O. Functionally, involved in unsaturated fatty acids biosynthesis. Catalyzes the dehydration of short chain beta-hydroxyacyl-ACPs and long chain saturated and unsaturated beta-hydroxyacyl-ACPs. This chain is 3-hydroxyacyl-[acyl-carrier-protein] dehydratase FabZ, found in Streptococcus pneumoniae (strain CGSP14).